The following is a 461-amino-acid chain: tRNA modification GTPase MnmE (461 aa).

Positions 23, 88, and 127 each coordinate (6S)-5-formyl-5,6,7,8-tetrahydrofolate. Residues Gly-223–Phe-383 form the TrmE-type G domain. Asn-233 contributes to the K(+) binding site. GTP contacts are provided by residues Asn-233–Ser-238, Thr-252–Thr-258, and Asp-277–Gly-280. Mg(2+) is bound at residue Ser-237. Residues Thr-252, Ile-254, and Thr-257 each coordinate K(+). A Mg(2+)-binding site is contributed by Thr-258. Lys-461 is a binding site for (6S)-5-formyl-5,6,7,8-tetrahydrofolate.

This sequence belongs to the TRAFAC class TrmE-Era-EngA-EngB-Septin-like GTPase superfamily. TrmE GTPase family. In terms of assembly, homodimer. Heterotetramer of two MnmE and two MnmG subunits. K(+) is required as a cofactor.

It localises to the cytoplasm. Its function is as follows. Exhibits a very high intrinsic GTPase hydrolysis rate. Involved in the addition of a carboxymethylaminomethyl (cmnm) group at the wobble position (U34) of certain tRNAs, forming tRNA-cmnm(5)s(2)U34. This chain is tRNA modification GTPase MnmE, found in Clostridium botulinum (strain Okra / Type B1).